We begin with the raw amino-acid sequence, 188 residues long: Cell division protein ZapC (188 aa).

It belongs to the ZapC family. Interacts directly with FtsZ.

It localises to the cytoplasm. In terms of biological role, contributes to the efficiency of the cell division process by stabilizing the polymeric form of the cell division protein FtsZ. Acts by promoting interactions between FtsZ protofilaments and suppressing the GTPase activity of FtsZ. In Psychromonas ingrahamii (strain DSM 17664 / CCUG 51855 / 37), this protein is Cell division protein ZapC.